Here is a 183-residue protein sequence, read N- to C-terminus: Putative 3-methyladenine DNA glycosylase (183 aa).

Belongs to the DNA glycosylase MPG family.

The sequence is that of Putative 3-methyladenine DNA glycosylase from Rickettsia africae (strain ESF-5).